The sequence spans 315 residues: MSFSNEMKVFSGNANRPLAEKIANYLNLQLGDCEVGRFADGEINVRINETVRGHDIFLIQPTSPPVNENLMELLIMIDAFKRASANTIAVVIPYYGYARQDRKAKGRDPISAKLVANLITVAGATRVLTVDLHAEQIQGFFDIPVDNLWSYPVFAEELLKRENIVPEETVVVSPDVGGVRRARRMAERLGTSLAILDKRRPSDNVAEVVNIIGEVEDKVVIMFDDIIDTAHSIVKGAEALKNAGAKRIIACATHGVFSDRALERIENSSIDTVYITDTIYHENLPEKVKVISVANLIGEAIMRIRKHLSVSTLFR.

Residues 40–42 (DGE) and 99–100 (RQ) contribute to the ATP site. Residues His-133 and Asp-175 each contribute to the Mg(2+) site. Lys-198 is a catalytic residue. D-ribose 5-phosphate-binding positions include Arg-200, Asp-224, and 228–232 (DTAHS).

Belongs to the ribose-phosphate pyrophosphokinase family. Class I subfamily. As to quaternary structure, homohexamer. It depends on Mg(2+) as a cofactor.

It localises to the cytoplasm. The enzyme catalyses D-ribose 5-phosphate + ATP = 5-phospho-alpha-D-ribose 1-diphosphate + AMP + H(+). The protein operates within metabolic intermediate biosynthesis; 5-phospho-alpha-D-ribose 1-diphosphate biosynthesis; 5-phospho-alpha-D-ribose 1-diphosphate from D-ribose 5-phosphate (route I): step 1/1. Involved in the biosynthesis of the central metabolite phospho-alpha-D-ribosyl-1-pyrophosphate (PRPP) via the transfer of pyrophosphoryl group from ATP to 1-hydroxyl of ribose-5-phosphate (Rib-5-P). This Thermotoga maritima (strain ATCC 43589 / DSM 3109 / JCM 10099 / NBRC 100826 / MSB8) protein is Ribose-phosphate pyrophosphokinase.